The following is a 1016-amino-acid chain: Vacuolar membrane protease (1016 aa).

The tract at residues 1 to 36 (MAETESGTGNSPSHRLSETSNASGNRSHQQSKQIAS) is disordered. Topologically, residues 1–57 (MAETESGTGNSPSHRLSETSNASGNRSHQQSKQIASYKSSKPNVFIRFIRAIFGYRK) are cytoplasmic. The helical transmembrane segment at 58-78 (TSVTLFVFITIIATLILVELS) threads the bilayer. Over 79–408 (NSLDFSVKLP…FVIPASQLVL (330 aa)) the chain is Vacuolar. 2 N-linked (GlcNAc...) asparagine glycosylation sites follow: asparagine 147 and asparagine 177. Histidine 191 and aspartate 203 together coordinate Zn(2+). Catalysis depends on glutamate 238, which acts as the Proton acceptor. Zn(2+) is bound by residues glutamate 239, glutamate 264, and histidine 337. A helical membrane pass occupies residues 409–429 (INVTCLAVIPLISLPLLVIIF). At 430 to 438 (NYKKNWHIG) the chain is on the cytoplasmic side. Residues 439–459 (FINAIKFPVSLVLSICILNII) form a helical membrane-spanning segment. Residues 460-481 (THNVIASINEFLPNSSYDSIVS) lie on the Vacuolar side of the membrane. N-linked (GlcNAc...) asparagine glycosylation is present at asparagine 473. A helical membrane pass occupies residues 482–502 (TLYSLFLLLNYLFLNGINFIF). Topologically, residues 503 to 511 (KGYKGLYHD) are cytoplasmic. Residues 512 to 532 (EKLILIIQTSFIYWVLLIVST) form a helical membrane-spanning segment. Topologically, residues 533–547 (NKLSKNKIGNDHTGE) are vacuolar. A helical membrane pass occupies residues 548 to 568 (FPLIMLFLLQSIGALFGLFSW). Residues 569–646 (SFKKTTPDEL…SFSYDWSIQY (78 aa)) lie on the Cytoplasmic side of the membrane. The interval 598–622 (YGSNEAELESGEPISSNSSVSLNSS) is disordered. Residues 612-622 (SSNSSVSLNSS) are compositionally biased toward low complexity. A helical transmembrane segment spans residues 647–667 (VVIVPLSSLIVYNTGSLLLSG). Topologically, residues 668-681 (LNKSIQESLNAEKL) are vacuolar. N-linked (GlcNAc...) asparagine glycosylation is present at asparagine 669. Residues 682 to 702 (IFDLIQLVAVTLAIPFLPFIF) form a helical membrane-spanning segment. Residues 703–706 (KINR) are Cytoplasmic-facing. The chain crosses the membrane as a helical span at residues 707 to 727 (LLVTALVLVFCSGFISIFLKS). Residues 728–1016 (PFDQLNPLKL…LVSVSKYVEI (289 aa)) lie on the Vacuolar side of the membrane. Asparagine 778, asparagine 821, asparagine 850, asparagine 875, and asparagine 977 each carry an N-linked (GlcNAc...) asparagine glycan.

This sequence belongs to the peptidase M28 family. Zn(2+) serves as cofactor.

Its subcellular location is the vacuole membrane. Its function is as follows. May be involved in vacuolar sorting and osmoregulation. This is Vacuolar membrane protease from Debaryomyces hansenii (strain ATCC 36239 / CBS 767 / BCRC 21394 / JCM 1990 / NBRC 0083 / IGC 2968) (Yeast).